Consider the following 164-residue polypeptide: Cyclic pyranopterin monophosphate synthase (164 aa).

Substrate is bound by residues 75 to 77 (MCH) and 116 to 117 (ME). Residue D131 is part of the active site.

Belongs to the MoaC family. Homohexamer; trimer of dimers.

It catalyses the reaction (8S)-3',8-cyclo-7,8-dihydroguanosine 5'-triphosphate = cyclic pyranopterin phosphate + diphosphate. Its pathway is cofactor biosynthesis; molybdopterin biosynthesis. In terms of biological role, catalyzes the conversion of (8S)-3',8-cyclo-7,8-dihydroguanosine 5'-triphosphate to cyclic pyranopterin monophosphate (cPMP). The chain is Cyclic pyranopterin monophosphate synthase from Staphylococcus aureus (strain MRSA252).